We begin with the raw amino-acid sequence, 309 residues long: Homoserine kinase (309 aa).

91 to 101 (PIGSGLGSSAC) contacts ATP.

The protein belongs to the GHMP kinase family. Homoserine kinase subfamily.

It is found in the cytoplasm. It carries out the reaction L-homoserine + ATP = O-phospho-L-homoserine + ADP + H(+). Its pathway is amino-acid biosynthesis; L-threonine biosynthesis; L-threonine from L-aspartate: step 4/5. Functionally, catalyzes the ATP-dependent phosphorylation of L-homoserine to L-homoserine phosphate. This chain is Homoserine kinase, found in Klebsiella pneumoniae (strain 342).